The sequence spans 498 residues: Lysine--tRNA ligase (498 aa).

Mg(2+) is bound by residues Glu-408 and Glu-415.

This sequence belongs to the class-II aminoacyl-tRNA synthetase family. In terms of assembly, homodimer. Mg(2+) serves as cofactor.

The protein localises to the cytoplasm. It catalyses the reaction tRNA(Lys) + L-lysine + ATP = L-lysyl-tRNA(Lys) + AMP + diphosphate. This chain is Lysine--tRNA ligase, found in Listeria monocytogenes serovar 1/2a (strain ATCC BAA-679 / EGD-e).